The chain runs to 715 residues: Phosphoribosylformylglycinamidine synthase subunit PurL (715 aa).

The active site involves H33. Position 36 (Y36) interacts with ATP. Position 77 (E77) interacts with Mg(2+). Substrate contacts are provided by residues S78–H81 and R100. H79 functions as the Proton acceptor in the catalytic mechanism. D101 provides a ligand contact to Mg(2+). Residue Q225 coordinates substrate. D253 serves as a coordination point for Mg(2+). E297–Q299 contributes to the substrate binding site. Residues N476 and G513 each contribute to the ATP site. N514 is a binding site for Mg(2+). S516 is a binding site for substrate.

Belongs to the FGAMS family. As to quaternary structure, monomer. Part of the FGAM synthase complex composed of 1 PurL, 1 PurQ and 2 PurS subunits.

It localises to the cytoplasm. The catalysed reaction is N(2)-formyl-N(1)-(5-phospho-beta-D-ribosyl)glycinamide + L-glutamine + ATP + H2O = 2-formamido-N(1)-(5-O-phospho-beta-D-ribosyl)acetamidine + L-glutamate + ADP + phosphate + H(+). It participates in purine metabolism; IMP biosynthesis via de novo pathway; 5-amino-1-(5-phospho-D-ribosyl)imidazole from N(2)-formyl-N(1)-(5-phospho-D-ribosyl)glycinamide: step 1/2. Its function is as follows. Part of the phosphoribosylformylglycinamidine synthase complex involved in the purines biosynthetic pathway. Catalyzes the ATP-dependent conversion of formylglycinamide ribonucleotide (FGAR) and glutamine to yield formylglycinamidine ribonucleotide (FGAM) and glutamate. The FGAM synthase complex is composed of three subunits. PurQ produces an ammonia molecule by converting glutamine to glutamate. PurL transfers the ammonia molecule to FGAR to form FGAM in an ATP-dependent manner. PurS interacts with PurQ and PurL and is thought to assist in the transfer of the ammonia molecule from PurQ to PurL. This Methanosarcina barkeri (strain Fusaro / DSM 804) protein is Phosphoribosylformylglycinamidine synthase subunit PurL.